A 202-amino-acid polypeptide reads, in one-letter code: LexA repressor (202 aa).

Residues 29-49 (VREICEATGLKSTSTVHGHLT) constitute a DNA-binding region (H-T-H motif). Active-site for autocatalytic cleavage activity residues include S126 and K163.

This sequence belongs to the peptidase S24 family. In terms of assembly, homodimer.

The enzyme catalyses Hydrolysis of Ala-|-Gly bond in repressor LexA.. In terms of biological role, represses a number of genes involved in the response to DNA damage (SOS response), including recA and lexA. In the presence of single-stranded DNA, RecA interacts with LexA causing an autocatalytic cleavage which disrupts the DNA-binding part of LexA, leading to derepression of the SOS regulon and eventually DNA repair. The protein is LexA repressor of Caldicellulosiruptor saccharolyticus (strain ATCC 43494 / DSM 8903 / Tp8T 6331).